Here is a 1166-residue protein sequence, read N- to C-terminus: UDP-N-acetylglucosamine transferase subunit ALG13 (1166 aa).

Residues 1-125 are glycosyltransferase activity; sequence MKRAFVTVGT…LHKEGHLFYC (125 aa). Residues 126–394 are deubiquitinase activity; sequence TCRVLSCPAP…GSRRNKHHAL (269 aa). Residues 225–346 enclose the OTU domain; it reads LFRKVVAKDA…NGHYDSVYSK (122 aa). The active-site For deubiquitinase activity is aspartate 233. The active-site Nucleophile; for deubiquitinase activity is the cysteine 236. Histidine 339 (for deubiquitinase activity) is an active-site residue. Positions 393–438 are disordered; the sequence is ALTASVEGSSDQKSSTEDRTEEAAACSSAASTPEGNKQGTERQKVP. The region spanning 486–546 is the Tudor domain; that stretch reads YYFLGDKCQV…RPVNQVALLP (61 aa). Composition is skewed to pro residues over residues 921 to 930, 941 to 957, and 1004 to 1034; these read PPPLPPPPPA, PLPPPPPPPPPPPPPYS, and QPQPQPQPQPQPQPQPQPQPQQPQQQQPPPQ. Disordered regions lie at residues 921-966 and 998-1056; these read PPPL…SDLP and QQQL…EQPL.

The protein belongs to the glycosyltransferase 28 family. As to quaternary structure, forms with ALG14 the active heterodimeric UDP-N-acetylglucosamine transferase complex. Not able to interact with ALG14 to form an active UDP-N-acetylglucosamine transferase complex.

The protein localises to the endoplasmic reticulum membrane. It catalyses the reaction an N-acetyl-alpha-D-glucosaminyl-diphospho-di-trans,poly-cis-dolichol + UDP-N-acetyl-alpha-D-glucosamine = an N,N'-diacetylchitobiosyl-diphospho-di-trans,poly-cis-dolichol + UDP + H(+). It functions in the pathway protein modification; protein glycosylation. Catalytic subunit of the UDP-N-acetylglucosamine transferase complex that operates in the biosynthetic pathway of dolichol-linked oligosaccharides, the glycan precursors employed in protein asparagine (N)-glycosylation. The assembly of dolichol-linked oligosaccharides begins on the cytosolic side of the endoplasmic reticulum membrane and finishes in its lumen. The sequential addition of sugars to dolichol pyrophosphate produces dolichol-linked oligosaccharides containing fourteen sugars, including two GlcNAcs, nine mannoses and three glucoses. Once assembled, the oligosaccharide is transferred from the lipid to nascent proteins by oligosaccharyltransferases. On the cytoplasmic face of the endoplasmic reticulum, the dimeric ALG13/ALG14 complex catalyzes the second step of dolichol pyrophosphate biosynthesis, transferring a beta1,4-linked N-acetylglucosamine (GlcNAc) from UDP-GlcNAc to GlcNAc-pyrophosphatedolichol (Gn-PDol) to produce N,N'-diacetylchitobiosyl diphosphodolichol. N,N'-diacetylchitobiosyl diphosphodolichol is a substrate for ALG1, the following enzyme in the biosynthetic pathway. In terms of biological role, no glycosyltransferase or deubiquitinase activity is detected for this potential multifunctional enzyme. This Mus musculus (Mouse) protein is UDP-N-acetylglucosamine transferase subunit ALG13.